A 340-amino-acid chain; its full sequence is MALKEGLRAWKRIFWRQILLTLGLLGLFLYGLPKFRHLEALIPMGVCPSATMSQLRDNFTGALRPWARPEVLTCTPWGAPIIWDGSFDPDVAKQEARQQNLTIGLTIFAVGRYLEKYLERFLETAEQHFMAGQSVMYYVFTELPGAVPRVALGPGRRLPVERVARERRWQDVSMARMRTLHAALGGLPGREAHFMFCMDVDQHFSGTFGPEALAESVAQLHSWHYHWPSWLLPFERDAHSAAAMAWGQGDFYNHAAVFGGSVAALRGLTAHCAGGLDWDRARGLEARWHDESHLNKFFWLHKPAKVLSPEFCWSPDIGPRAEIRRPRLLWAPKGYRLLRN.

Over 1-12 (MALKEGLRAWKR) the chain is Cytoplasmic. Residues 13–32 (IFWRQILLTLGLLGLFLYGL) form a helical; Signal-anchor for type II membrane protein membrane-spanning segment. Topologically, residues 33–340 (PKFRHLEALI…APKGYRLLRN (308 aa)) are lumenal. N-linked (GlcNAc...) asparagine glycosylation is found at Asn-58 and Asn-100. Asp-199 and Asp-201 together coordinate Mn(2+).

The protein belongs to the glycosyltransferase 6 family. The cofactor is Mn(2+). In terms of tissue distribution, expressed in thymus and monocyte derived dendritic cells.

The protein localises to the golgi apparatus. The protein resides in the golgi stack membrane. The enzyme catalyses a beta-D-galactosyl-(1-&gt;4)-N-acetyl-beta-D-glucosaminyl derivative + UDP-alpha-D-galactose = an alpha-D-galactosyl-(1-&gt;3)-beta-D-galactosyl-(1-&gt;4)-N-acetyl-beta-D-glucosaminyl derivative + UDP + H(+). It carries out the reaction a beta-D-Gal-(1-&gt;4)-beta-D-Glc-(1&lt;-&gt;1)-Cer(d18:1(4E)) + UDP-alpha-D-galactose = an isogloboside iGb3Cer (d18:1(4E)) + UDP + H(+). The catalysed reaction is a globoside Gb3Cer + UDP-alpha-D-galactose = a globoside GalGb3Cer + UDP + H(+). Functionally, synthesizes the galactose-alpha(1,3)-galactose group on the glycosphingolipid isoglobotrihexosylceramide or isogloboside 3 (iGb3) by catalyzing the transfer of galactose from UDP-Galactose to its acceptor molecule Gal-beta-1,4-Glc-ceramide. Can also catalyze the addition of galactose to iGb3 itself to form polygalactose structures. This chain is Alpha-1,3-galactosyltransferase 2, found in Homo sapiens (Human).